A 243-amino-acid chain; its full sequence is Probable transcriptional regulatory protein BAPKO_0024/BafPKo_0025 (243 aa).

Belongs to the TACO1 family.

The protein localises to the cytoplasm. The chain is Probable transcriptional regulatory protein BAPKO_0024/BafPKo_0025 from Borreliella afzelii (strain PKo) (Borrelia afzelii).